The chain runs to 566 residues: DNA ligase B (566 aa).

The active-site N6-AMP-lysine intermediate is the lysine 125.

The protein belongs to the NAD-dependent DNA ligase family. LigB subfamily.

The enzyme catalyses NAD(+) + (deoxyribonucleotide)n-3'-hydroxyl + 5'-phospho-(deoxyribonucleotide)m = (deoxyribonucleotide)n+m + AMP + beta-nicotinamide D-nucleotide.. In terms of biological role, catalyzes the formation of phosphodiester linkages between 5'-phosphoryl and 3'-hydroxyl groups in double-stranded DNA using NAD as a coenzyme and as the energy source for the reaction. In Pseudomonas putida (strain ATCC 47054 / DSM 6125 / CFBP 8728 / NCIMB 11950 / KT2440), this protein is DNA ligase B.